The following is a 276-amino-acid chain: Non-homologous end joining protein Ku (276 aa).

A Ku domain is found at 11-177 (ISFGLVHIPI…PEEIRSMEPL (167 aa)). Positions 256 to 276 (QVKTQQKKEAAPKKERRRKTS) are disordered.

This sequence belongs to the prokaryotic Ku family. In terms of assembly, homodimer. Interacts with LigD.

Its function is as follows. With LigD forms a non-homologous end joining (NHEJ) DNA repair enzyme, which repairs dsDNA breaks with reduced fidelity. Binds linear dsDNA with 5'- and 3'- overhangs but not closed circular dsDNA nor ssDNA. Recruits and stimulates the ligase activity of LigD. In Heliobacterium modesticaldum (strain ATCC 51547 / Ice1), this protein is Non-homologous end joining protein Ku.